The sequence spans 102 residues: Large ribosomal subunit protein bL21 (102 aa).

The protein belongs to the bacterial ribosomal protein bL21 family. As to quaternary structure, part of the 50S ribosomal subunit. Contacts protein L20.

Functionally, this protein binds to 23S rRNA in the presence of protein L20. The sequence is that of Large ribosomal subunit protein bL21 from Macrococcus caseolyticus (strain JCSC5402) (Macrococcoides caseolyticum).